We begin with the raw amino-acid sequence, 294 residues long: MHNTTKRVTVPALEAMLYETIKVLDHGFIRVIDYMGDDSSIVQAARVSYGKGTKQLNQDKGLINYLLRHYHTTPFEMCDIKFHIKLPIFIARQWIRHRTASVNEYSARYSILGNEFYLPEPTDIASQSAINKQCRAGDSLPKKVSEKVLAILEEDARRCYMHYKELMNADEDGNIIDENVAGIARELARMNLTLNYYTEWYWKINLHNLLHFLRLRTDSKAQYEIRVYAGKILDIVKAWVPFTYEAFEEYRLQGANISRKGLEVIKRMIQGEKVIHETSGMNKREWEELVKIFR.

The ThyX domain maps to 27-250; that stretch reads GFIRVIDYMG…PFTYEAFEEY (224 aa). FAD-binding positions include Thr73, 96–98, and Glu104; that span reads RHR. DUMP-binding positions include 93–96, 104–108, and Arg189; these read QWIR and EYSAR. The short motif at 96 to 106 is the ThyX motif element; that stretch reads RHRTASVNEYS. FAD-binding positions include 205–207 and His211; that span reads NLH. Arg216 provides a ligand contact to dUMP. The Involved in ionization of N3 of dUMP, leading to its activation role is filled by Arg216.

The protein belongs to the thymidylate synthase ThyX family. In terms of assembly, homotetramer. Requires FAD as cofactor.

It catalyses the reaction dUMP + (6R)-5,10-methylene-5,6,7,8-tetrahydrofolate + NADPH + H(+) = dTMP + (6S)-5,6,7,8-tetrahydrofolate + NADP(+). It participates in pyrimidine metabolism; dTTP biosynthesis. Its function is as follows. Catalyzes the reductive methylation of 2'-deoxyuridine-5'-monophosphate (dUMP) to 2'-deoxythymidine-5'-monophosphate (dTMP) while utilizing 5,10-methylenetetrahydrofolate (mTHF) as the methyl donor, and NADPH and FADH(2) as the reductant. In Rickettsia typhi (strain ATCC VR-144 / Wilmington), this protein is Flavin-dependent thymidylate synthase.